The primary structure comprises 384 residues: Dual-specificity RNA methyltransferase RlmN (384 aa).

Glu-105 acts as the Proton acceptor in catalysis. The 240-residue stretch at 111-350 (EDDRATLCVS…TIVRKTRGDD (240 aa)) folds into the Radical SAM core domain. Cys-118 and Cys-355 form a disulfide bridge. Positions 125, 129, and 132 each coordinate [4Fe-4S] cluster. S-adenosyl-L-methionine-binding positions include 179 to 180 (GE), Ser-211, 233 to 235 (SLH), and Asn-312. The active-site S-methylcysteine intermediate is the Cys-355.

This sequence belongs to the radical SAM superfamily. RlmN family. [4Fe-4S] cluster is required as a cofactor.

Its subcellular location is the cytoplasm. The enzyme catalyses adenosine(2503) in 23S rRNA + 2 reduced [2Fe-2S]-[ferredoxin] + 2 S-adenosyl-L-methionine = 2-methyladenosine(2503) in 23S rRNA + 5'-deoxyadenosine + L-methionine + 2 oxidized [2Fe-2S]-[ferredoxin] + S-adenosyl-L-homocysteine. The catalysed reaction is adenosine(37) in tRNA + 2 reduced [2Fe-2S]-[ferredoxin] + 2 S-adenosyl-L-methionine = 2-methyladenosine(37) in tRNA + 5'-deoxyadenosine + L-methionine + 2 oxidized [2Fe-2S]-[ferredoxin] + S-adenosyl-L-homocysteine. Its function is as follows. Specifically methylates position 2 of adenine 2503 in 23S rRNA and position 2 of adenine 37 in tRNAs. m2A2503 modification seems to play a crucial role in the proofreading step occurring at the peptidyl transferase center and thus would serve to optimize ribosomal fidelity. This chain is Dual-specificity RNA methyltransferase RlmN, found in Shigella boydii serotype 18 (strain CDC 3083-94 / BS512).